Here is a 381-residue protein sequence, read N- to C-terminus: Flap endonuclease 1 (381 aa).

Positions 1 to 105 are N-domain; that stretch reads MGVKGLNQLI…GELEKRLLKR (105 aa). A Mg(2+)-binding site is contributed by D34. Residues R47 and R71 each coordinate DNA. 5 residues coordinate Mg(2+): D87, E159, E161, D180, and D182. Residues 123-254 form an I-domain region; sequence EVMKFEKRLV…VTAYKLIKEH (132 aa). Position 159 (E159) interacts with DNA. DNA is bound by residues G232 and D234. D234 lines the Mg(2+) pocket. The segment at 340-348 is interaction with PCNA; it reads VQGRLDGFF. Residues 354 to 381 form a disordered region; sequence PGAKAGDKKGDKKRGSDSKASNNKKKRK. The span at 358 to 370 shows a compositional bias: basic and acidic residues; the sequence is AGDKKGDKKRGSD.

The protein belongs to the XPG/RAD2 endonuclease family. FEN1 subfamily. In terms of assembly, interacts with PCNA. Three molecules of FEN1 bind to one PCNA trimer with each molecule binding to one PCNA monomer. PCNA stimulates the nuclease activity without altering cleavage specificity. It depends on Mg(2+) as a cofactor. In terms of processing, phosphorylated. Phosphorylation upon DNA damage induces relocalization to the nuclear plasma.

It is found in the nucleus. The protein localises to the nucleolus. The protein resides in the nucleoplasm. Its subcellular location is the mitochondrion. Its function is as follows. Structure-specific nuclease with 5'-flap endonuclease and 5'-3' exonuclease activities involved in DNA replication and repair. During DNA replication, cleaves the 5'-overhanging flap structure that is generated by displacement synthesis when DNA polymerase encounters the 5'-end of a downstream Okazaki fragment. It enters the flap from the 5'-end and then tracks to cleave the flap base, leaving a nick for ligation. Also involved in the long patch base excision repair (LP-BER) pathway, by cleaving within the apurinic/apyrimidinic (AP) site-terminated flap. Acts as a genome stabilization factor that prevents flaps from equilibrating into structures that lead to duplications and deletions. Also possesses 5'-3' exonuclease activity on nicked or gapped double-stranded DNA, and exhibits RNase H activity. Also involved in replication and repair of rDNA and in repairing mitochondrial DNA. The protein is Flap endonuclease 1 of Scheffersomyces stipitis (strain ATCC 58785 / CBS 6054 / NBRC 10063 / NRRL Y-11545) (Yeast).